The sequence spans 265 residues: Indole-3-glycerol phosphate synthase (265 aa).

This sequence belongs to the TrpC family.

It catalyses the reaction 1-(2-carboxyphenylamino)-1-deoxy-D-ribulose 5-phosphate + H(+) = (1S,2R)-1-C-(indol-3-yl)glycerol 3-phosphate + CO2 + H2O. It functions in the pathway amino-acid biosynthesis; L-tryptophan biosynthesis; L-tryptophan from chorismate: step 4/5. The polypeptide is Indole-3-glycerol phosphate synthase (Chromobacterium violaceum (strain ATCC 12472 / DSM 30191 / JCM 1249 / CCUG 213 / NBRC 12614 / NCIMB 9131 / NCTC 9757 / MK)).